The chain runs to 443 residues: Carboxypeptidase M (443 aa).

The signal sequence occupies residues 1-17; that stretch reads MDRARLWLGLLLPVVAA. In terms of domain architecture, Peptidase M14 spans 21–311; that stretch reads RYHHQEGMEA…ASLIEYIKQV (291 aa). Asparagine 38 carries N-linked (GlcNAc...) asparagine glycosylation. Positions 83 and 86 each coordinate Zn(2+). Disulfide bonds link cysteine 138–cysteine 285, cysteine 242–cysteine 284, and cysteine 341–cysteine 410. Asparagine 164 is a glycosylation site (N-linked (GlcNAc...) asparagine). Zn(2+) is bound at residue histidine 190. Glutamate 281 serves as the catalytic Proton donor/acceptor. Asparagine 363 carries N-linked (GlcNAc...) asparagine glycosylation. Residue serine 423 is the site of GPI-anchor amidated serine attachment. A propeptide spans 424-443 (removed in mature form); the sequence is AATKPSLGVFFMTLLYVFFK.

This sequence belongs to the peptidase M14 family. Zn(2+) serves as cofactor.

It is found in the cell membrane. The enzyme catalyses Cleavage of C-terminal arginine or lysine residues from polypeptides.. Its function is as follows. Specifically removes C-terminal basic residues (Arg or Lys) from peptides and proteins. It is believed to play important roles in the control of peptide hormone and growth factor activity at the cell surface, and in the membrane-localized degradation of extracellular proteins. The polypeptide is Carboxypeptidase M (Cpm) (Mus musculus (Mouse)).